A 385-amino-acid polypeptide reads, in one-letter code: GTPase Obg (385 aa).

In terms of domain architecture, Obg spans 1–159 (MKFVDEATIL…REIQLELMLL (159 aa)). An OBG-type G domain is found at 160–333 (ADVGMLGLPN…LCWDVMAFIN (174 aa)). GTP-binding positions include 166–173 (GLPNAGKS), 191–195 (FTTLV), 213–216 (DIPG), 283–286 (NKAD), and 314–316 (SAA). Residues serine 173 and threonine 193 each coordinate Mg(2+). The segment covering 362–379 (QQEEAEETLDDDWDEDGV) has biased composition (acidic residues). Residues 362-385 (QQEEAEETLDDDWDEDGVETIYQR) are disordered.

Belongs to the TRAFAC class OBG-HflX-like GTPase superfamily. OBG GTPase family. Monomer. The cofactor is Mg(2+).

The protein resides in the cytoplasm. In terms of biological role, an essential GTPase which binds GTP, GDP and possibly (p)ppGpp with moderate affinity, with high nucleotide exchange rates and a fairly low GTP hydrolysis rate. Plays a role in control of the cell cycle, stress response, ribosome biogenesis and in those bacteria that undergo differentiation, in morphogenesis control. The chain is GTPase Obg from Sodalis glossinidius (strain morsitans).